Reading from the N-terminus, the 480-residue chain is Glycogen synthase (480 aa).

An ADP-alpha-D-glucose-binding site is contributed by K15.

Belongs to the glycosyltransferase 1 family. Bacterial/plant glycogen synthase subfamily.

It carries out the reaction [(1-&gt;4)-alpha-D-glucosyl](n) + ADP-alpha-D-glucose = [(1-&gt;4)-alpha-D-glucosyl](n+1) + ADP + H(+). It functions in the pathway glycan biosynthesis; glycogen biosynthesis. In terms of biological role, synthesizes alpha-1,4-glucan chains using ADP-glucose. The sequence is that of Glycogen synthase from Opitutus terrae (strain DSM 11246 / JCM 15787 / PB90-1).